Here is a 163-residue protein sequence, read N- to C-terminus: Putative pre-16S rRNA nuclease (163 aa).

It belongs to the YqgF nuclease family.

Its subcellular location is the cytoplasm. In terms of biological role, could be a nuclease involved in processing of the 5'-end of pre-16S rRNA. In Chlamydia caviae (strain ATCC VR-813 / DSM 19441 / 03DC25 / GPIC) (Chlamydophila caviae), this protein is Putative pre-16S rRNA nuclease.